The primary structure comprises 416 residues: Glutamyl-tRNA reductase (416 aa).

Residues threonine 49–arginine 52, serine 105, glutamate 110–glutamine 112, and glutamine 116 contribute to the substrate site. Cysteine 50 functions as the Nucleophile in the catalytic mechanism. Glycine 185 to isoleucine 190 provides a ligand contact to NADP(+).

This sequence belongs to the glutamyl-tRNA reductase family. As to quaternary structure, homodimer.

It catalyses the reaction (S)-4-amino-5-oxopentanoate + tRNA(Glu) + NADP(+) = L-glutamyl-tRNA(Glu) + NADPH + H(+). Its pathway is porphyrin-containing compound metabolism; protoporphyrin-IX biosynthesis; 5-aminolevulinate from L-glutamyl-tRNA(Glu): step 1/2. Functionally, catalyzes the NADPH-dependent reduction of glutamyl-tRNA(Glu) to glutamate 1-semialdehyde (GSA). This chain is Glutamyl-tRNA reductase, found in Shewanella halifaxensis (strain HAW-EB4).